Here is a 426-residue protein sequence, read N- to C-terminus: Formate-dependent phosphoribosylglycinamide formyltransferase (426 aa).

N(1)-(5-phospho-beta-D-ribosyl)glycinamide contacts are provided by residues 26–27 and E86; that span reads EL. ATP-binding positions include R118, K158, 197–200, and E205; that span reads EEFI. In terms of domain architecture, ATP-grasp spans 123–324; sequence EAIASTGART…EFALHAKAVL (202 aa). 2 residues coordinate Mg(2+): E279 and E293. Residues D300, K374, and 381–382 each bind N(1)-(5-phospho-beta-D-ribosyl)glycinamide; that span reads RR.

The protein belongs to the PurK/PurT family. As to quaternary structure, homodimer.

It catalyses the reaction N(1)-(5-phospho-beta-D-ribosyl)glycinamide + formate + ATP = N(2)-formyl-N(1)-(5-phospho-beta-D-ribosyl)glycinamide + ADP + phosphate + H(+). Its pathway is purine metabolism; IMP biosynthesis via de novo pathway; N(2)-formyl-N(1)-(5-phospho-D-ribosyl)glycinamide from N(1)-(5-phospho-D-ribosyl)glycinamide (formate route): step 1/1. Involved in the de novo purine biosynthesis. Catalyzes the transfer of formate to 5-phospho-ribosyl-glycinamide (GAR), producing 5-phospho-ribosyl-N-formylglycinamide (FGAR). Formate is provided by PurU via hydrolysis of 10-formyl-tetrahydrofolate. The polypeptide is Formate-dependent phosphoribosylglycinamide formyltransferase (Methanocella arvoryzae (strain DSM 22066 / NBRC 105507 / MRE50)).